A 446-amino-acid chain; its full sequence is Indoleacetamide hydrolase (446 aa).

Active-site charge relay system residues include K71 and S146. S170 (acyl-ester intermediate) is an active-site residue.

Belongs to the amidase family.

The protein operates within plant hormone metabolism; auxin biosynthesis. In terms of biological role, hydrolyzes indole-3-acetamide (IAM) into indole-3-acetic acid (IAA). In Pseudomonas syringae pv. syringae, this protein is Indoleacetamide hydrolase (iaaH).